Here is a 157-residue protein sequence, read N- to C-terminus: Mediator of RNA polymerase II transcription subunit 22 (157 aa).

This sequence belongs to the Mediator complex subunit 22 family. Component of the Mediator complex.

The protein resides in the nucleus. Its function is as follows. Component of the Mediator complex, a coactivator involved in the regulated transcription of nearly all RNA polymerase II-dependent genes. Mediator functions as a bridge to convey information from gene-specific regulatory proteins to the basal RNA polymerase II transcription machinery. Mediator is recruited to promoters by direct interactions with regulatory proteins and serves as a scaffold for the assembly of a functional preinitiation complex with RNA polymerase II and the general transcription factors. This chain is Mediator of RNA polymerase II transcription subunit 22 (mdt-22), found in Caenorhabditis elegans.